Here is a 999-residue protein sequence, read N- to C-terminus: Hypoxia up-regulated protein 1 (999 aa).

A signal peptide spans 1 to 32 (MADKVRRQRPRRRVCWALVAVLLADLLALSDT). Residues Asn155, Asn222, and Asn515 are each glycosylated (N-linked (GlcNAc...) asparagine). Ser567 carries the post-translational modification Phosphoserine. The disordered stretch occupies residues 578–694 (GNTISSLFGG…KKQKPARKRR (117 aa)). N-linked (GlcNAc...) asparagine glycosylation occurs at Asn596. Composition is skewed to basic and acidic residues over residues 611–626 (GSKD…KEEA) and 641–672 (PKGD…KAEA). N-linked (GlcNAc...) asparagine glycosylation is found at Asn830, Asn862, and Asn869. Lys883 carries the N6-acetyllysine modification. The segment at 909–999 (AKFTKPRPRP…QKRPLKNDEL (91 aa)) is disordered. Asn922 and Asn931 each carry an N-linked (GlcNAc...) asparagine glycan. The Prevents secretion from ER motif lies at 996-999 (NDEL).

It belongs to the heat shock protein 70 family. As to quaternary structure, part of a large chaperone multiprotein complex comprising DNAJB11, HSP90B1, HSPA5, HYOU, PDIA2, PDIA4, PDIA6, PPIB, SDF2L1, UGGT1 and very small amounts of ERP29, but not, or at very low levels, CALR nor CANX. Highly expressed in tissues that contain well-developed endoplasmic reticulum and synthesize large amounts of secretory proteins. Highly expressed in liver and pancreas and lower expression in brain and kidney. Also expressed in macrophages within aortic atherosclerotic plaques, and in breast cancers.

Its subcellular location is the endoplasmic reticulum lumen. Has a pivotal role in cytoprotective cellular mechanisms triggered by oxygen deprivation. Promotes HSPA5/BiP-mediated ATP nucleotide exchange and thereby activates the unfolded protein response (UPR) pathway in the presence of endoplasmic reticulum stress. May play a role as a molecular chaperone and participate in protein folding. This chain is Hypoxia up-regulated protein 1 (HYOU1), found in Homo sapiens (Human).